The following is a 542-amino-acid chain: Beta-fructofuranosidase, insoluble isoenzyme 5 (542 aa).

Residues 50–53 (WQND), glutamine 69, tryptophan 77, and 114–115 (WS) contribute to the substrate site. Aspartate 53 is an active-site residue. N-linked (GlcNAc...) asparagine glycosylation is present at asparagine 142. Substrate contacts are provided by residues 178–179 (RD) and glutamate 233. Cysteine 389 and cysteine 436 are joined by a disulfide. N-linked (GlcNAc...) asparagine glycans are attached at residues asparagine 510 and asparagine 516.

This sequence belongs to the glycosyl hydrolase 32 family. Expressed in roots and leaves.

Its subcellular location is the secreted. It is found in the extracellular space. The protein localises to the apoplast. It localises to the cell wall. The catalysed reaction is Hydrolysis of terminal non-reducing beta-D-fructofuranoside residues in beta-D-fructofuranosides.. May play a role in stress response. This Oryza sativa subsp. japonica (Rice) protein is Beta-fructofuranosidase, insoluble isoenzyme 5 (CIN5).